The sequence spans 191 residues: 7-methyl-GTP pyrophosphatase (191 aa).

Asp70 serves as the catalytic Proton acceptor.

This sequence belongs to the Maf family. YceF subfamily. A divalent metal cation serves as cofactor.

The protein localises to the cytoplasm. It carries out the reaction N(7)-methyl-GTP + H2O = N(7)-methyl-GMP + diphosphate + H(+). Functionally, nucleoside triphosphate pyrophosphatase that hydrolyzes 7-methyl-GTP (m(7)GTP). May have a dual role in cell division arrest and in preventing the incorporation of modified nucleotides into cellular nucleic acids. The protein is 7-methyl-GTP pyrophosphatase of Xanthomonas oryzae pv. oryzae (strain KACC10331 / KXO85).